The primary structure comprises 307 residues: Glycine--tRNA ligase alpha subunit (307 aa).

The protein belongs to the class-II aminoacyl-tRNA synthetase family. Tetramer of two alpha and two beta subunits.

Its subcellular location is the cytoplasm. It catalyses the reaction tRNA(Gly) + glycine + ATP = glycyl-tRNA(Gly) + AMP + diphosphate. The protein is Glycine--tRNA ligase alpha subunit of Aeromonas salmonicida (strain A449).